We begin with the raw amino-acid sequence, 300 residues long: Sulfate adenylyltransferase subunit 2 (300 aa).

Positions 281–300 are disordered; sequence RAIDRDEAGSMEKKKREGYF.

This sequence belongs to the PAPS reductase family. CysD subfamily. In terms of assembly, heterodimer composed of CysD, the smaller subunit, and CysN.

It catalyses the reaction sulfate + ATP + H(+) = adenosine 5'-phosphosulfate + diphosphate. It functions in the pathway sulfur metabolism; hydrogen sulfide biosynthesis; sulfite from sulfate: step 1/3. Functionally, with CysN forms the ATP sulfurylase (ATPS) that catalyzes the adenylation of sulfate producing adenosine 5'-phosphosulfate (APS) and diphosphate, the first enzymatic step in sulfur assimilation pathway. APS synthesis involves the formation of a high-energy phosphoric-sulfuric acid anhydride bond driven by GTP hydrolysis by CysN coupled to ATP hydrolysis by CysD. This chain is Sulfate adenylyltransferase subunit 2, found in Brucella abortus (strain 2308).